Reading from the N-terminus, the 674-residue chain is uncharacterized protein (674 aa).

The first 24 residues, Met-1–Ala-24, serve as a signal peptide directing secretion. The next 2 membrane-spanning stretches (helical) occupy residues Ile-226–Lys-246 and Ile-254–Leu-274. The segment at Gly-363–Arg-384 is disordered. 4 helical membrane passes run Ile-409–Phe-429, Cys-436–Phe-456, Val-469–Thr-489, and Val-562–Phe-582. A disordered region spans residues Ser-624–Leu-674. Over residues Pro-633–Gly-647 the composition is skewed to basic and acidic residues.

The protein belongs to the TrbL/VirB6 family.

The protein localises to the cell membrane. This is an uncharacterized protein from Rickettsia typhi (strain ATCC VR-144 / Wilmington).